Here is a 96-residue protein sequence, read N- to C-terminus: RNA-binding protein Hfq (96 aa).

The Sm domain maps to 9–68 (DPFLNALRRERVPVSIYLVNGIKLQGQIESFDQFVILLKNTVSQMVYKHAISTVVPSRPV). The interval 64-96 (PSRPVSHHSNTGTNQAGTNYSGGNATQQDDVAE) is disordered. The span at 70-96 (HHSNTGTNQAGTNYSGGNATQQDDVAE) shows a compositional bias: polar residues.

Belongs to the Hfq family. As to quaternary structure, homohexamer.

RNA chaperone that binds small regulatory RNA (sRNAs) and mRNAs to facilitate mRNA translational regulation in response to envelope stress, environmental stress and changes in metabolite concentrations. Also binds with high specificity to tRNAs. In Proteus mirabilis (strain HI4320), this protein is RNA-binding protein Hfq.